Consider the following 188-residue polypeptide: Adenine phosphoribosyltransferase (188 aa).

The protein belongs to the purine/pyrimidine phosphoribosyltransferase family. In terms of assembly, homodimer.

The protein localises to the cytoplasm. It catalyses the reaction AMP + diphosphate = 5-phospho-alpha-D-ribose 1-diphosphate + adenine. It participates in purine metabolism; AMP biosynthesis via salvage pathway; AMP from adenine: step 1/1. Functionally, catalyzes a salvage reaction resulting in the formation of AMP, that is energically less costly than de novo synthesis. This Paraburkholderia xenovorans (strain LB400) protein is Adenine phosphoribosyltransferase.